We begin with the raw amino-acid sequence, 160 residues long: Radiation-inducible immediate-early gene IEX-1 (160 aa).

The interval 1–35 (MCHSRNHLHTMTGLRAPSPAPSTGPELRRGSGPEI) is disordered. The Cytoplasmic segment spans residues 1-85 (MCHSRNHLHT…PTEEPNIAKR (85 aa)). The residue at position 31 (Ser31) is a Phosphoserine. A helical; Signal-anchor for type II membrane protein transmembrane segment spans residues 86–102 (VLFLLFAIIFCQILMAE). Residues 103-153 (EGVSQPLAPEDATSAVTPEPISAPITAPPVLEPLNLTSESSDYALDLKAFL) are Extracellular-facing. A glycan (N-linked (GlcNAc...) asparagine) is linked at Asn137.

The protein belongs to the IER3 family. Interacts with the PPP2R5C-PP2A holoenzyme and ERK kinases; regulates ERK dephosphorylation. Glycosylated. As to expression, expressed predominantly in the lung, testes and the uterus.

It localises to the membrane. In terms of biological role, may play a role in the ERK signaling pathway by inhibiting the dephosphorylation of ERK by phosphatase PP2A-PPP2R5C holoenzyme. Also acts as an ERK downstream effector mediating survival. As a member of the NUPR1/RELB/IER3 survival pathway, may allow the development of pancreatic intraepithelial neoplasias. This Mus musculus (Mouse) protein is Radiation-inducible immediate-early gene IEX-1 (Ier3).